Here is a 274-residue protein sequence, read N- to C-terminus: Rhamnulose-1-phosphate aldolase (274 aa).

Residue E117 is part of the active site. The Zn(2+) site is built by H141, H143, and H212.

The protein belongs to the aldolase class II family. RhaD subfamily. In terms of assembly, homotetramer. Zn(2+) serves as cofactor.

The protein resides in the cytoplasm. The catalysed reaction is L-rhamnulose 1-phosphate = (S)-lactaldehyde + dihydroxyacetone phosphate. It functions in the pathway carbohydrate degradation; L-rhamnose degradation; glycerone phosphate from L-rhamnose: step 3/3. Its function is as follows. Catalyzes the reversible cleavage of L-rhamnulose-1-phosphate to dihydroxyacetone phosphate (DHAP) and L-lactaldehyde. This is Rhamnulose-1-phosphate aldolase from Escherichia coli (strain SMS-3-5 / SECEC).